Consider the following 269-residue polypeptide: Phosphate import ATP-binding protein PstB 2 (269 aa).

Positions 23–264 constitute an ABC transporter domain; that stretch reads LHTEDLHVFY…PKIQATEDYV (242 aa). 55 to 62 is an ATP binding site; sequence GPSGCGKS.

The protein belongs to the ABC transporter superfamily. Phosphate importer (TC 3.A.1.7) family. In terms of assembly, the complex is composed of two ATP-binding proteins (PstB), two transmembrane proteins (PstC and PstA) and a solute-binding protein (PstS).

The protein localises to the cell membrane. It catalyses the reaction phosphate(out) + ATP + H2O = ADP + 2 phosphate(in) + H(+). Its function is as follows. Part of the ABC transporter complex PstSACB involved in phosphate import. Responsible for energy coupling to the transport system. The protein is Phosphate import ATP-binding protein PstB 2 of Enterococcus faecalis (strain ATCC 700802 / V583).